The sequence spans 72 residues: Translation initiation factor IF-1 (72 aa).

Positions 1 to 72 (MSKEDSFEME…SKGRITYRAR (72 aa)) constitute an S1-like domain.

Belongs to the IF-1 family. Component of the 30S ribosomal translation pre-initiation complex which assembles on the 30S ribosome in the order IF-2 and IF-3, IF-1 and N-formylmethionyl-tRNA(fMet); mRNA recruitment can occur at any time during PIC assembly.

The protein localises to the cytoplasm. Its function is as follows. One of the essential components for the initiation of protein synthesis. Stabilizes the binding of IF-2 and IF-3 on the 30S subunit to which N-formylmethionyl-tRNA(fMet) subsequently binds. Helps modulate mRNA selection, yielding the 30S pre-initiation complex (PIC). Upon addition of the 50S ribosomal subunit IF-1, IF-2 and IF-3 are released leaving the mature 70S translation initiation complex. This Pseudomonas syringae pv. tomato (strain ATCC BAA-871 / DC3000) protein is Translation initiation factor IF-1.